Here is a 488-residue protein sequence, read N- to C-terminus: Phenylalanine--tRNA ligase alpha subunit (488 aa).

L-phenylalanine is bound by residues T332, 371–373 (QLD), and F410. E412 provides a ligand contact to Mg(2+). F435 serves as a coordination point for L-phenylalanine.

Belongs to the class-II aminoacyl-tRNA synthetase family. Phe-tRNA synthetase alpha subunit type 2 subfamily. In terms of assembly, tetramer of two alpha and two beta subunits. Mg(2+) is required as a cofactor.

The protein resides in the cytoplasm. The enzyme catalyses tRNA(Phe) + L-phenylalanine + ATP = L-phenylalanyl-tRNA(Phe) + AMP + diphosphate + H(+). The sequence is that of Phenylalanine--tRNA ligase alpha subunit from Aeropyrum pernix (strain ATCC 700893 / DSM 11879 / JCM 9820 / NBRC 100138 / K1).